The primary structure comprises 398 residues: Succinate--CoA ligase [ADP-forming] subunit beta (398 aa).

The ATP-grasp domain occupies 9–254 (KRLLHTYGAP…LSEEDEKEIE (246 aa)). ATP-binding positions include K46, 53 to 55 (GRG), E109, A112, and E117. Mg(2+) is bound by residues N209 and D223. Substrate contacts are provided by residues N274 and 331-333 (GIM).

It belongs to the succinate/malate CoA ligase beta subunit family. Heterotetramer of two alpha and two beta subunits. Mg(2+) serves as cofactor.

The catalysed reaction is succinate + ATP + CoA = succinyl-CoA + ADP + phosphate. It carries out the reaction GTP + succinate + CoA = succinyl-CoA + GDP + phosphate. It functions in the pathway carbohydrate metabolism; tricarboxylic acid cycle; succinate from succinyl-CoA (ligase route): step 1/1. In terms of biological role, succinyl-CoA synthetase functions in the citric acid cycle (TCA), coupling the hydrolysis of succinyl-CoA to the synthesis of either ATP or GTP and thus represents the only step of substrate-level phosphorylation in the TCA. The beta subunit provides nucleotide specificity of the enzyme and binds the substrate succinate, while the binding sites for coenzyme A and phosphate are found in the alpha subunit. The sequence is that of Succinate--CoA ligase [ADP-forming] subunit beta from Brucella anthropi (strain ATCC 49188 / DSM 6882 / CCUG 24695 / JCM 21032 / LMG 3331 / NBRC 15819 / NCTC 12168 / Alc 37) (Ochrobactrum anthropi).